Reading from the N-terminus, the 704-residue chain is Fibulin-1 (704 aa).

Positions Met1–Gly25 are cleaved as a signal peptide. 35 disulfide bridges follow: Cys33-Cys59, Cys34-Cys66, Cys47-Cys67, Cys76-Cys107, Cys89-Cys108, Cys110-Cys134, Cys111-Cys141, Cys124-Cys142, Cys181-Cys191, Cys187-Cys200, Cys202-Cys215, Cys221-Cys234, Cys228-Cys243, Cys249-Cys261, Cys267-Cys280, Cys274-Cys289, Cys295-Cys307, Cys313-Cys326, Cys320-Cys335, Cys342-Cys355, Cys361-Cys374, Cys368-Cys383, Cys385-Cys398, Cys404-Cys416, Cys412-Cys425, Cys427-Cys440, Cys446-Cys455, Cys451-Cys464, Cys466-Cys480, Cys486-Cys499, Cys495-Cys508, Cys510-Cys524, Cys530-Cys543, Cys537-Cys552, and Cys557-Cys578. 3 Anaphylatoxin-like domains span residues Cys33–His74, Tyr75–Tyr109, and Cys110–Cys142. Asn96 carries N-linked (GlcNAc...) asparagine glycosylation. Residues Leu177–Glu216 enclose the EGF-like 1 domain. The region spanning Asp217–Lys262 is the EGF-like 2; calcium-binding domain. An EGF-like 3; calcium-binding domain is found at Asp263–Ile308. Residues Asp309–Val356 form the EGF-like 4; calcium-binding domain. The region spanning Asp357–Ile399 is the EGF-like 5; calcium-binding domain. The self-association and FN1-binding stretch occupies residues Asp357 to Glu441. The 42-residue stretch at Asp400–Glu441 folds into the EGF-like 6; calcium-binding domain. The EGF-like 7; calcium-binding domain occupies Asp442–Glu481. Residues Asp482–Gln525 enclose the EGF-like 8; calcium-binding domain. An EGF-like 9; calcium-binding domain is found at Asp526–Ile579. N-linked (GlcNAc...) asparagine glycosylation is found at Asn536 and Asn540.

The protein belongs to the fibulin family. In terms of assembly, homomultimerizes and interacts with various extracellular matrix components.

It is found in the secreted. The protein resides in the extracellular space. The protein localises to the extracellular matrix. Functionally, incorporated into fibronectin-containing matrix fibers. May play a role in cell adhesion and migration along protein fibers within the extracellular matrix (ECM). Could be important for certain developmental processes and contribute to the supramolecular organization of ECM architecture, in particular to those of basement membranes. This chain is Fibulin-1 (FBLN1), found in Gallus gallus (Chicken).